A 191-amino-acid chain; its full sequence is Crossover junction endodeoxyribonuclease RuvC (191 aa).

Catalysis depends on residues Asp-7, Glu-67, and Asp-140. The Mg(2+) site is built by Asp-7, Glu-67, and Asp-140.

Belongs to the RuvC family. In terms of assembly, homodimer which binds Holliday junction (HJ) DNA. The HJ becomes 2-fold symmetrical on binding to RuvC with unstacked arms; it has a different conformation from HJ DNA in complex with RuvA. In the full resolvosome a probable DNA-RuvA(4)-RuvB(12)-RuvC(2) complex forms which resolves the HJ. Requires Mg(2+) as cofactor.

The protein resides in the cytoplasm. It carries out the reaction Endonucleolytic cleavage at a junction such as a reciprocal single-stranded crossover between two homologous DNA duplexes (Holliday junction).. Its function is as follows. The RuvA-RuvB-RuvC complex processes Holliday junction (HJ) DNA during genetic recombination and DNA repair. Endonuclease that resolves HJ intermediates. Cleaves cruciform DNA by making single-stranded nicks across the HJ at symmetrical positions within the homologous arms, yielding a 5'-phosphate and a 3'-hydroxyl group; requires a central core of homology in the junction. The consensus cleavage sequence is 5'-(A/T)TT(C/G)-3'. Cleavage occurs on the 3'-side of the TT dinucleotide at the point of strand exchange. HJ branch migration catalyzed by RuvA-RuvB allows RuvC to scan DNA until it finds its consensus sequence, where it cleaves and resolves the cruciform DNA. The sequence is that of Crossover junction endodeoxyribonuclease RuvC from Pelodictyon phaeoclathratiforme (strain DSM 5477 / BU-1).